A 337-amino-acid chain; its full sequence is Glyceraldehyde-3-phosphate dehydrogenase (337 aa).

NAD(+) contacts are provided by residues 12 to 13 (RI), Asp-34, and Arg-79. D-glyceraldehyde 3-phosphate-binding positions include 150–152 (SCT), Thr-181, 210–211 (TG), and Arg-233. The active-site Nucleophile is Cys-151. Asn-315 is an NAD(+) binding site.

It belongs to the glyceraldehyde-3-phosphate dehydrogenase family. Homotetramer.

The protein resides in the cytoplasm. The catalysed reaction is D-glyceraldehyde 3-phosphate + phosphate + NAD(+) = (2R)-3-phospho-glyceroyl phosphate + NADH + H(+). Its pathway is carbohydrate degradation; glycolysis; pyruvate from D-glyceraldehyde 3-phosphate: step 1/5. The sequence is that of Glyceraldehyde-3-phosphate dehydrogenase (GPD) from Ajellomyces capsulatus (Darling's disease fungus).